The primary structure comprises 940 residues: Isoleucine--tRNA ligase (940 aa).

The 'HIGH' region motif lies at 58 to 68 (PYANGSIHIGH). Residue Glu-564 coordinates L-isoleucyl-5'-AMP. Positions 605-609 (KMSKS) match the 'KMSKS' region motif. Lys-608 is a binding site for ATP. Residues Cys-903, Cys-906, Cys-923, and Cys-926 each contribute to the Zn(2+) site.

This sequence belongs to the class-I aminoacyl-tRNA synthetase family. IleS type 1 subfamily. As to quaternary structure, monomer. The cofactor is Zn(2+).

It localises to the cytoplasm. The catalysed reaction is tRNA(Ile) + L-isoleucine + ATP = L-isoleucyl-tRNA(Ile) + AMP + diphosphate. In terms of biological role, catalyzes the attachment of isoleucine to tRNA(Ile). As IleRS can inadvertently accommodate and process structurally similar amino acids such as valine, to avoid such errors it has two additional distinct tRNA(Ile)-dependent editing activities. One activity is designated as 'pretransfer' editing and involves the hydrolysis of activated Val-AMP. The other activity is designated 'posttransfer' editing and involves deacylation of mischarged Val-tRNA(Ile). This chain is Isoleucine--tRNA ligase, found in Shewanella sp. (strain W3-18-1).